Reading from the N-terminus, the 1021-residue chain is Sodium/potassium-transporting ATPase subunit alpha-1 (1021 aa).

A propeptide spanning residues 1 to 5 (MGKGV) is cleaved from the precursor. The span at 1–11 (MGKGVGRDKYE) shows a compositional bias: basic and acidic residues. Residues 1–36 (MGKGVGRDKYEPAAVSEHGDKKKAKKERDMDELKKE) are disordered. Residues 4 to 85 (GVGRDKYEPA…NALTPPPTTP (82 aa)) lie on the Cytoplasmic side of the membrane. Lys9 carries the post-translational modification N6-acetyllysine. Position 10 is a phosphotyrosine (Tyr10). Position 16 is a phosphoserine; by PKC (Ser16). The residue at position 21 (Lys21) is an N6-acetyllysine. Positions 26-36 (KERDMDELKKE) are enriched in basic and acidic residues. 2 positions are modified to phosphoserine: Ser38 and Ser45. Positions 80–82 (PPP) are phosphoinositide-3 kinase binding. A helical transmembrane segment spans residues 86 to 106 (EWVKFCRQLFGGFSMLLWIGA). The Extracellular portion of the chain corresponds to 107–129 (ILCFLAYGIQAATEEEPQNDNLY). Residues 130 to 150 (LGVVLSAVVIITGCFSYYQEA) traverse the membrane as a helical segment. Residues 151-286 (KSSKIMESFK…GGQTPIAAEI (136 aa)) are Cytoplasmic-facing. Positions 214-233 (SSLTGESEPQTRSPDFTNEN) are disordered. The residue at position 226 (Ser226) is a Phosphoserine. Residue Tyr258 is modified to Phosphotyrosine. The chain crosses the membrane as a helical span at residues 287 to 306 (EHFIHIITGVAVFLGVSFFI). The Extracellular segment spans residues 307-318 (LSLILEYTWLEA). A helical transmembrane segment spans residues 319–336 (VIFLIGIIVANVPEGLLA). At 337–770 (TVTVCLTLTA…EEGRLIFDNL (434 aa)) the chain is on the cytoplasmic side. Residue Asp374 is the 4-aspartylphosphate intermediate of the active site. 2 positions are modified to phosphoserine: Ser450 and Ser482. Lys485 is an ATP binding site. Tyr540 is subject to Phosphotyrosine. The segment at 594–715 (RAAVPDAVGK…QGAIVAVTGD (122 aa)) is mediates interaction with SCN7A. Position 659 is an N6-succinyllysine (Lys659). Phosphoserine is present on residues Ser666 and Ser673. Asp715 and Asp719 together coordinate Mg(2+). A helical transmembrane segment spans residues 771-790 (KKSIAYTLTSNIPEITPFLI). The Extracellular segment spans residues 791–800 (FIIANIPLPL). A helical transmembrane segment spans residues 801–821 (GTVTILCIDLGTDMVPAISLA). Residues 822 to 841 (YEQAESDIMKRQPRNPKTDK) are Cytoplasmic-facing. The chain crosses the membrane as a helical span at residues 842-864 (LVNERLISMAYGQIGMIQALGGF). Over 865-916 (FTYFVILAENGFLPTHLLGLRVDWDDRWINDVEDSYGQQWTYEQRKIVEFTC) the chain is Extracellular. Residues 917 to 936 (HTAFFVSIVVVQWADLVICK) traverse the membrane as a helical segment. Residues 937-949 (TRRNSVFQQGMKN) lie on the Cytoplasmic side of the membrane. At Ser941 the chain carries Phosphoserine; by PKA. Residues 950–968 (KILIFGLFEETALAAFLSY) traverse the membrane as a helical segment. Residues 969–983 (CPGMGVALRMYPLKP) lie on the Extracellular side of the membrane. A helical transmembrane segment spans residues 984 to 1004 (TWWFCAFPYSLLIFVYDEVRK). Residues 1005–1021 (LIIRRRPGGWVEKETYY) lie on the Cytoplasmic side of the membrane.

It belongs to the cation transport ATPase (P-type) (TC 3.A.3) family. Type IIC subfamily. In terms of assembly, the sodium/potassium-transporting ATPase is composed of a catalytic alpha subunit, an auxiliary non-catalytic beta subunit and an additional regulatory subunit. Interacts with regulatory subunit FXYD1. Interacts with regulatory subunit FXYD3. Interacts with SIK1. Interacts with SLC35G1 and STIM1. Interacts with CLN3; this interaction regulates the sodium/potassium-transporting ATPase complex localization at the plasma membrane. Interacts with SCN7A; activates ATP1A1 P-type sodium:potassium-exchanging transporter activity which indirectly signals to nearby neurons to regulate sodium homeostasis. Phosphorylation on Tyr-10 modulates pumping activity. Phosphorylation of Ser-941 by PKA modulates the response of ATP1A1 to PKC. Dephosphorylation by protein phosphatase 2A (PP2A) following increases in intracellular sodium, leading to increase catalytic activity.

The protein localises to the cell membrane. It localises to the basolateral cell membrane. It is found in the sarcolemma. The protein resides in the cell projection. Its subcellular location is the axon. The protein localises to the melanosome. It carries out the reaction K(+)(out) + Na(+)(in) + ATP + H2O = K(+)(in) + Na(+)(out) + ADP + phosphate + H(+). This is the catalytic component of the active enzyme, which catalyzes the hydrolysis of ATP coupled with the exchange of sodium and potassium ions across the plasma membrane. This action creates the electrochemical gradient of sodium and potassium ions, providing the energy for active transport of various nutrients. Could also be part of an osmosensory signaling pathway that senses body-fluid sodium levels and controls salt intake behavior as well as voluntary water intake to regulate sodium homeostasis. The protein is Sodium/potassium-transporting ATPase subunit alpha-1 (ATP1A1) of Canis lupus familiaris (Dog).